A 1358-amino-acid polypeptide reads, in one-letter code: DNA-directed RNA polymerase subunit beta (1358 aa).

It belongs to the RNA polymerase beta chain family. The RNAP catalytic core consists of 2 alpha, 1 beta, 1 beta' and 1 omega subunit. When a sigma factor is associated with the core the holoenzyme is formed, which can initiate transcription.

It catalyses the reaction RNA(n) + a ribonucleoside 5'-triphosphate = RNA(n+1) + diphosphate. In terms of biological role, DNA-dependent RNA polymerase catalyzes the transcription of DNA into RNA using the four ribonucleoside triphosphates as substrates. This Francisella tularensis subsp. holarctica (strain LVS) protein is DNA-directed RNA polymerase subunit beta.